Reading from the N-terminus, the 501-residue chain is Aspartyl/glutamyl-tRNA(Asn/Gln) amidotransferase subunit B (501 aa).

This sequence belongs to the GatB/GatE family. GatB subfamily. In terms of assembly, heterotrimer of A, B and C subunits.

It catalyses the reaction L-glutamyl-tRNA(Gln) + L-glutamine + ATP + H2O = L-glutaminyl-tRNA(Gln) + L-glutamate + ADP + phosphate + H(+). It carries out the reaction L-aspartyl-tRNA(Asn) + L-glutamine + ATP + H2O = L-asparaginyl-tRNA(Asn) + L-glutamate + ADP + phosphate + 2 H(+). Allows the formation of correctly charged Asn-tRNA(Asn) or Gln-tRNA(Gln) through the transamidation of misacylated Asp-tRNA(Asn) or Glu-tRNA(Gln) in organisms which lack either or both of asparaginyl-tRNA or glutaminyl-tRNA synthetases. The reaction takes place in the presence of glutamine and ATP through an activated phospho-Asp-tRNA(Asn) or phospho-Glu-tRNA(Gln). In Mycobacterium sp. (strain KMS), this protein is Aspartyl/glutamyl-tRNA(Asn/Gln) amidotransferase subunit B.